The sequence spans 2153 residues: RNA-directed RNA polymerase L (2153 aa).

The Mn(2+) site is built by H36, E54, D97, E110, and V111. K124 (for endonuclease activity) is an active-site residue. Positions 957–1143 (TGNVIKFKRR…AVNQEMWKSM (187 aa)) constitute a RdRp catalytic domain. D1100 is a binding site for Mg(2+). An interaction with the viral nucleoprotein region spans residues 1291–2153 (KQAFYSYKHT…FPHDPVSSFY (863 aa)).

This sequence belongs to the Bunyavirales RNA polymerase family. Interacts with the viral nucleoprotein; this interaction is required for RdRp function. Requires Mn(2+) as cofactor. Mg(2+) is required as a cofactor.

The protein localises to the host cytoplasm. It localises to the host perinuclear region. The enzyme catalyses RNA(n) + a ribonucleoside 5'-triphosphate = RNA(n+1) + diphosphate. Functionally, RNA-dependent RNA polymerase, which is responsible for the replication and transcription of the viral RNA genome using antigenomic RNA as an intermediate. During transcription, synthesizes subgenomic RNAs and assures their capping by a cap-snatching mechanism, which involves the endonuclease activity cleaving the host capped pre-mRNAs. These short capped RNAs are then used as primers for viral transcription. Cleaves ssRNA substrates but not DNA. Seems to downregulate the expression of its own and heterologous mRNAs through its endonuclease activity. The protein is RNA-directed RNA polymerase L of Sin Nombre orthohantavirus (SNV).